Here is a 387-residue protein sequence, read N- to C-terminus: Glutamyl-tRNA reductase 1 (387 aa).

Residues 45 to 48 (TCNR), Ser96, 101 to 103 (ETD), and Gln107 contribute to the substrate site. The active-site Nucleophile is Cys46. NADP(+) is bound at residue 175–180 (GAGSVG).

It belongs to the glutamyl-tRNA reductase family. Homodimer.

It catalyses the reaction (S)-4-amino-5-oxopentanoate + tRNA(Glu) + NADP(+) = L-glutamyl-tRNA(Glu) + NADPH + H(+). Its pathway is porphyrin-containing compound metabolism; protoporphyrin-IX biosynthesis; 5-aminolevulinate from L-glutamyl-tRNA(Glu): step 1/2. Its function is as follows. Catalyzes the NADPH-dependent reduction of glutamyl-tRNA(Glu) to glutamate 1-semialdehyde (GSA). This is Glutamyl-tRNA reductase 1 from Pyrobaculum arsenaticum (strain DSM 13514 / JCM 11321 / PZ6).